A 673-amino-acid chain; its full sequence is DNA ligase (673 aa).

34-38 is a binding site for NAD(+); the sequence is DAAFD. Positions 54–73 are disordered; it reads LRRPDSPTQRVGGATAPDFA. NAD(+) contacts are provided by residues 83–84 and Glu114; that span reads SL. Lys116 functions as the N6-AMP-lysine intermediate in the catalytic mechanism. Residues Arg137, Glu176, Lys292, and Lys316 each coordinate NAD(+). Cys410, Cys413, Cys428, and Cys433 together coordinate Zn(2+). The BRCT domain occupies 594–673; sequence PAEGPLAGMT…DEFCERYLQG (80 aa).

The protein belongs to the NAD-dependent DNA ligase family. LigA subfamily. Requires Mg(2+) as cofactor. It depends on Mn(2+) as a cofactor.

The catalysed reaction is NAD(+) + (deoxyribonucleotide)n-3'-hydroxyl + 5'-phospho-(deoxyribonucleotide)m = (deoxyribonucleotide)n+m + AMP + beta-nicotinamide D-nucleotide.. Functionally, DNA ligase that catalyzes the formation of phosphodiester linkages between 5'-phosphoryl and 3'-hydroxyl groups in double-stranded DNA using NAD as a coenzyme and as the energy source for the reaction. It is essential for DNA replication and repair of damaged DNA. This Symbiobacterium thermophilum (strain DSM 24528 / JCM 14929 / IAM 14863 / T) protein is DNA ligase.